Reading from the N-terminus, the 177-residue chain is Nucleoside triphosphate/diphosphate phosphatase (177 aa).

The active-site Proton donor is the Arg-23. Mg(2+) is bound by residues Asn-87, Asp-103, Asp-105, Asp-107, Asp-120, and Glu-123.

This sequence belongs to the Ntdp family. The cofactor is Mg(2+).

The catalysed reaction is a ribonucleoside 5'-triphosphate + H2O = a ribonucleoside 5'-diphosphate + phosphate + H(+). It catalyses the reaction a ribonucleoside 5'-diphosphate + H2O = a ribonucleoside 5'-phosphate + phosphate + H(+). In terms of biological role, has nucleoside phosphatase activity towards nucleoside triphosphates and nucleoside diphosphates. The protein is Nucleoside triphosphate/diphosphate phosphatase of Streptococcus pneumoniae serotype 2 (strain D39 / NCTC 7466).